Reading from the N-terminus, the 419-residue chain is Serine hydroxymethyltransferase (419 aa).

(6S)-5,6,7,8-tetrahydrofolate is bound by residues Leu121 and Gly125 to Leu127. Lys230 is modified (N6-(pyridoxal phosphate)lysine). Residue Ser355–Phe357 participates in (6S)-5,6,7,8-tetrahydrofolate binding.

The protein belongs to the SHMT family. In terms of assembly, homodimer. It depends on pyridoxal 5'-phosphate as a cofactor.

The protein localises to the cytoplasm. The catalysed reaction is (6R)-5,10-methylene-5,6,7,8-tetrahydrofolate + glycine + H2O = (6S)-5,6,7,8-tetrahydrofolate + L-serine. The protein operates within one-carbon metabolism; tetrahydrofolate interconversion. Its pathway is amino-acid biosynthesis; glycine biosynthesis; glycine from L-serine: step 1/1. Its function is as follows. Catalyzes the reversible interconversion of serine and glycine with tetrahydrofolate (THF) serving as the one-carbon carrier. This reaction serves as the major source of one-carbon groups required for the biosynthesis of purines, thymidylate, methionine, and other important biomolecules. Also exhibits THF-independent aldolase activity toward beta-hydroxyamino acids, producing glycine and aldehydes, via a retro-aldol mechanism. This Streptococcus equi subsp. zooepidemicus (strain MGCS10565) protein is Serine hydroxymethyltransferase.